Here is a 293-residue protein sequence, read N- to C-terminus: SAGA-associated factor 29 (293 aa).

A coiled-coil region spans residues 12 to 88 (ELLAELQRLL…KALDKIAEIK (77 aa)). Positions 152-293 (GDYVAKPGDK…VVACKETKKK (142 aa)) constitute an SGF29 C-terminal domain. Histone H3K4me3 N-terminus binding stretches follow at residues 194–196 (DID) and 240–243 (QTTC). The segment at 264–266 (FED) is histone H3K4me3 binding.

Belongs to the SGF29 family. In terms of assembly, interacts with dimethylated and trimethylated 'Lys-4' of histone H3 (H3K4me2 and H3K4me3), with a preference for the trimethylated form (H3K4me3). Component of some SAGA-type complexes. Component of the ADA2A-containing complex (ATAC).

The protein resides in the nucleus. Functionally, chromatin reader component of some histone acetyltransferase (HAT) SAGA-type complexes like the TFTC-HAT, ATAC or STAGA complexes. SGF29 specifically recognizes and binds methylated 'Lys-4' of histone H3 (H3K4me), with a preference for trimethylated form (H3K4me3). In the SAGA-type complexes, SGF29 is required to recruit complexes to H3K4me. Also binds non-histone proteins that are methylated on Lys residues. The sequence is that of SAGA-associated factor 29 from Gallus gallus (Chicken).